Here is a 92-residue protein sequence, read N- to C-terminus: Small ribosomal subunit protein uS19c (92 aa).

This sequence belongs to the universal ribosomal protein uS19 family.

The protein resides in the plastid. It localises to the chloroplast. Its function is as follows. Protein S19 forms a complex with S13 that binds strongly to the 16S ribosomal RNA. This is Small ribosomal subunit protein uS19c from Chlorokybus atmophyticus (Soil alga).